The primary structure comprises 151 residues: D-aminoacyl-tRNA deacylase (151 aa).

The short motif at 137 to 138 (GP) is the Gly-cisPro motif, important for rejection of L-amino acids element.

It belongs to the DTD family. In terms of assembly, homodimer.

The protein resides in the cytoplasm. It carries out the reaction glycyl-tRNA(Ala) + H2O = tRNA(Ala) + glycine + H(+). The enzyme catalyses a D-aminoacyl-tRNA + H2O = a tRNA + a D-alpha-amino acid + H(+). Functionally, an aminoacyl-tRNA editing enzyme that deacylates mischarged D-aminoacyl-tRNAs. Also deacylates mischarged glycyl-tRNA(Ala), protecting cells against glycine mischarging by AlaRS. Acts via tRNA-based rather than protein-based catalysis; rejects L-amino acids rather than detecting D-amino acids in the active site. By recycling D-aminoacyl-tRNA to D-amino acids and free tRNA molecules, this enzyme counteracts the toxicity associated with the formation of D-aminoacyl-tRNA entities in vivo and helps enforce protein L-homochirality. This Listeria monocytogenes serotype 4a (strain HCC23) protein is D-aminoacyl-tRNA deacylase.